The primary structure comprises 562 residues: Sperm-tail PG-rich repeat-containing protein 2 (562 aa).

STPGR repeat units lie at residues 21–31, 60–73, and 96–118; these read GPGTYNINRSL, SPGP…ITRN, and PGPG…AKSP. Disordered stretches follow at residues 114-136 and 192-215; these read KAKS…APSI and SGRR…QEDQ. The segment covering 127-136 has biased composition (low complexity); sequence PSLSPAAPSI. Basic and acidic residues predominate over residues 193-202; the sequence is GRREPLKGAD. 6 STPGR repeats span residues 204 to 227, 253 to 271, 336 to 350, 385 to 409, 425 to 462, and 478 to 492; these read PGPG…VKRE, PGPG…SNTH, TPGP…YGLA, TPGP…TAAF, TPPP…SCFL, and TPGP…KSSS. A disordered region spans residues 543-562; sequence STRSLSSHRSWRKPTAHSSA. Residues 551–562 are compositionally biased toward basic residues; sequence RSWRKPTAHSSA.

In Danio rerio (Zebrafish), this protein is Sperm-tail PG-rich repeat-containing protein 2 (stpg2).